Here is a 243-residue protein sequence, read N- to C-terminus: ATP synthase subunit a (243 aa).

Transmembrane regions (helical) follow at residues 29–49 (NASLFMVLSTISVALFCYIGL), 54–74 (IIPNGIQSIVEFIYEFIVSTI), 89–109 (VFTIFMFIATCNLLGILPLGF), 114–134 (HIAVTFAISMVVFVSVTIIGF), 144–164 (ILLPQGTPGWLAPMMVFIELF), 182–202 (IAGHTIIKVIAGFVVKMNIFL), and 208–228 (IFIIILIGFEIFVAILQAYIF).

It belongs to the ATPase A chain family. In terms of assembly, F-type ATPases have 2 components, CF(1) - the catalytic core - and CF(0) - the membrane proton channel. CF(1) has five subunits: alpha(3), beta(3), gamma(1), delta(1), epsilon(1). CF(0) has three main subunits: a(1), b(2) and c(9-12). The alpha and beta chains form an alternating ring which encloses part of the gamma chain. CF(1) is attached to CF(0) by a central stalk formed by the gamma and epsilon chains, while a peripheral stalk is formed by the delta and b chains.

Its subcellular location is the cell inner membrane. In terms of biological role, key component of the proton channel; it plays a direct role in the translocation of protons across the membrane. This is ATP synthase subunit a from Ehrlichia canis (strain Jake).